The following is a 600-amino-acid chain: Elongation factor 4 (600 aa).

The region spanning 5–187 (SNIRNFSIIA…ALVERIPAPT (183 aa)) is the tr-type G domain. GTP is bound by residues 17 to 22 (DHGKST) and 134 to 137 (NKID).

It belongs to the TRAFAC class translation factor GTPase superfamily. Classic translation factor GTPase family. LepA subfamily.

Its subcellular location is the cell inner membrane. It carries out the reaction GTP + H2O = GDP + phosphate + H(+). Functionally, required for accurate and efficient protein synthesis under certain stress conditions. May act as a fidelity factor of the translation reaction, by catalyzing a one-codon backward translocation of tRNAs on improperly translocated ribosomes. Back-translocation proceeds from a post-translocation (POST) complex to a pre-translocation (PRE) complex, thus giving elongation factor G a second chance to translocate the tRNAs correctly. Binds to ribosomes in a GTP-dependent manner. In Psychrobacter sp. (strain PRwf-1), this protein is Elongation factor 4.